The chain runs to 67 residues: MFTLKKSLLLIFFLGTINLSLCEEERNADEEERRDDLEERDVEVEKRLLSLALAALPKLFCLIFKKC.

A signal peptide spans 1-22 (MFTLKKSLLLIFFLGTINLSLC). Positions 23 to 45 (EEERNADEEERRDDLEERDVEVE) are excised as a propeptide. Residues cysteine 61 and cysteine 67 are joined by a disulfide bond.

This sequence belongs to the frog skin active peptide (FSAP) family. Brevinin subfamily. As to expression, expressed by the skin glands.

The protein resides in the secreted. Antimicrobial peptide. Has low activity against the Gram-positive bacterium S.aureus (MIC=12.5 uM) and the Gram-negative bacterium E.coli (MIC=25 uM). Has weak hemolytic activity against human erythrocytes. This is Brevinin-1CDYa from Rana dybowskii (Dybovsky's frog).